A 177-amino-acid polypeptide reads, in one-letter code: Baseplate hub assembly protein gp28 (177 aa).

The gp27 and gp28 proteins seem to combine to form a small hub precursor during morphogenesis.

Its function is as follows. Baseplate hub assembly chaperone involved in the tail assembly. This chain is Baseplate hub assembly protein gp28 (28), found in Enterobacteria phage T4 (Bacteriophage T4).